Here is a 104-residue protein sequence, read N- to C-terminus: MLCNFIYALHSCSPDYIMRILTFKFSLFLSFRGKSYATLHIGFSLHHSTIIGENSCPVLLSVTLSLHSFTLYTIGSAPLVSTPRTSQPSSLPVGMNNAFSFNFL.

This is an uncharacterized protein from Acidianus two-tailed virus (ATV).